The chain runs to 147 residues: Holdfast attachment protein A (147 aa).

Involved in attachment of the holdfast to the cell. The holdfast is a structure that allows the bacteria to firmly adheres to surfaces. The polypeptide is Holdfast attachment protein A (hfaA) (Caulobacter vibrioides (strain ATCC 19089 / CIP 103742 / CB 15) (Caulobacter crescentus)).